The primary structure comprises 691 residues: Glycine--tRNA ligase beta subunit (691 aa).

Belongs to the class-II aminoacyl-tRNA synthetase family. In terms of assembly, tetramer of two alpha and two beta subunits.

It localises to the cytoplasm. It catalyses the reaction tRNA(Gly) + glycine + ATP = glycyl-tRNA(Gly) + AMP + diphosphate. This is Glycine--tRNA ligase beta subunit from Levilactobacillus brevis (strain ATCC 367 / BCRC 12310 / CIP 105137 / JCM 1170 / LMG 11437 / NCIMB 947 / NCTC 947) (Lactobacillus brevis).